Consider the following 838-residue polypeptide: DNA gyrase subunit A (838 aa).

The Topo IIA-type catalytic domain occupies 41–510 (LPEVRDGLKP…ADGDVSDEDL (470 aa)). Catalysis depends on Tyr-129, which acts as the O-(5'-phospho-DNA)-tyrosine intermediate. The GyrA-box signature appears at 537–543 (QKRGGKG).

Belongs to the type II topoisomerase GyrA/ParC subunit family. Heterotetramer, composed of two GyrA and two GyrB chains. In the heterotetramer, GyrA contains the active site tyrosine that forms a transient covalent intermediate with DNA, while GyrB binds cofactors and catalyzes ATP hydrolysis. Mg(2+) serves as cofactor.

The protein resides in the cytoplasm. The enzyme catalyses ATP-dependent breakage, passage and rejoining of double-stranded DNA.. Its activity is regulated as follows. DNA supercoiling is inhibited by EDTA, novobiocin, coumermycin and ciprofloxacin. Functionally, a type II topoisomerase that negatively supercoils closed circular double-stranded (ds) DNA in an ATP-dependent manner to modulate DNA topology and maintain chromosomes in an underwound state. Also catalyzes the interconversion of other topological isomers of double-stranded DNA rings, including catenanes and knotted rings. Relaxes negatively supercoiled DNA in an ATP-independent manner. A linear reaction intermediate can be trapped in the presence of the antibiotic ciprofloxacin. Negative supercoiling favors strand separation, and DNA replication, transcription, recombination and repair, all of which involve strand separation. Type II topoisomerases break and join 2 DNA strands simultaneously in an ATP-dependent manner. The sequence is that of DNA gyrase subunit A from Mycobacterium bovis (strain BCG / Pasteur 1173P2).